A 151-amino-acid polypeptide reads, in one-letter code: Large ribosomal subunit protein bL9 (151 aa).

The protein belongs to the bacterial ribosomal protein bL9 family.

Functionally, binds to the 23S rRNA. The sequence is that of Large ribosomal subunit protein bL9 from Lactobacillus delbrueckii subsp. bulgaricus (strain ATCC 11842 / DSM 20081 / BCRC 10696 / JCM 1002 / NBRC 13953 / NCIMB 11778 / NCTC 12712 / WDCM 00102 / Lb 14).